The sequence spans 522 residues: TNF receptor-associated factor 6 (522 aa).

The tract at residues 1 to 354 (MSLLNCENSC…EAQQCNGIYI (354 aa)) is interaction with TAX1BP1. The RING-type; degenerate zinc finger occupies 70–109 (CPICLMALREAVQTPCGHRFCKACIIKSIRDAGHKCPVDN). Residue Lys-124 forms a Glycyl lysine isopeptide (Lys-Gly) (interchain with G-Cter in SUMO); alternate linkage. Lys-124 participates in a covalent cross-link: Glycyl lysine isopeptide (Lys-Gly) (interchain with G-Cter in ubiquitin); alternate. Residue Lys-142 forms a Glycyl lysine isopeptide (Lys-Gly) (interchain with G-Cter in SUMO) linkage. TRAF-type zinc fingers lie at residues 150-202 (DHQA…EDKE) and 203-259 (IHDQ…NHLA). Residues 288-348 (YVSEVRNFQE…DKVAEIEAQQ (61 aa)) adopt a coiled-coil conformation. A Glycyl lysine isopeptide (Lys-Gly) (interchain with G-Cter in ubiquitin) cross-link involves residue Lys-319. One can recognise an MATH domain in the interval 350-499 (NGIYIWKIGN…DDTLLVRCEV (150 aa)). Positions 355–522 (WKIGNFGMHL…FQPRSTDSGV (168 aa)) are interaction with TANK. Lys-453 participates in a covalent cross-link: Glycyl lysine isopeptide (Lys-Gly) (interchain with G-Cter in SUMO).

The protein belongs to the TNF receptor-associated factor family. A subfamily. Homotrimer. Homooligomer. N-terminal region is dimeric while C-terminal region is trimeric; maybe providing a mode of oligomerization. Upon IL1B treatment, forms a complex with PELI1, IRAK1, IRAK4 and MYD88; this complex recruits MAP3K7/TAK1, TAB1 and TAB2 to mediate NF-kappa-B activation. Direct binding of SMAD6 to PELI1 prevents the complex formation and hence negatively regulates IL1R-TLR signaling and eventually NF-kappa-B-mediated gene expression. Binds to TNFRSF5/CD40 and TNFRSF11A/RANK. Associates with NGFR, TNFRSF17, IRAK2, IRAK3, RIPK2, MAP3K1, MAP3K5, MAP3K14, CSK, TRAF, TRAF-interacting protein TRIP and TNF receptor associated protein TDP2. Interacts with IL17R. Interacts with SQSTM1 bridging NTRK1 and NGFR. Forms a ternary complex with SQSTM1 and PRKCZ. Interacts with PELI2 and PELI3. Binds UBE2V1. Interacts with TAX1BP1; this interaction mediates deubiquitination of TRAF6 and inhibition of NF-kappa-B activation. Interacts with ZNF675. Interacts with ARRB1 and ARRB2. Interacts with MAP3K7 and TAB1/MAP3K7IP1; during IL-1 signaling. Interacts with UBE2N. Interacts with TGFBR1, HDAC1 and RANGAP1. Interacts with AKT1, AKT2 and AKT3. Interacts (via TRAF domains) with NUMBL (via C-terminal). Interacts with RBCK1. Interacts with LIMD1 (via LIM domains). Interacts with RSAD2/viperin. Interacts (via C-terminus) with EIF2AK2/PKR (via the kinase catalytic domain). Interacts with ZFAND5. Interacts with IL1RL1. Interacts with TRAFD1. Interacts with AJUBA. Interacts with MAVS/IPS1. Interacts (via TRAF domains) with DYNC2I2 (via WD domains). Interacts with IFIT3 (via N-terminus). Interacts with TICAM2. Interacts with CARD14. Interacts with CD40 and MAP3K8; the interaction is required for ERK activation. Interacts with TICAM1 and this interaction is enhanced in the presence of WDFY1. Interacts with TANK; this interaction increases in response to DNA damage. Interacts with USP10; this interaction increases in response to DNA damage. Interacts with ZC3H12A; this interaction increases in response to DNA damage and is stimulated by TANK. Interacts with WDFY3. Interacts with TRIM13. Interacts with GPS2. Interacts (via C-terminus) with SASH1. Interacts with LRRC19. Interacts with IL17RA and TRAF3IP2. Interacts with TOMM70. Interacts with AMBRA1; interaction is required to mediate 'Lys-63'-linked ubiquitination of ULK1. Interacts with CRBN; this interaction inhibits TLR4-mediated signaling by preventing TRAF6-mediated ubiquitination of ECSIT. Post-translationally, sumoylated on Lys-124, Lys-142 and Lys-453 with SUMO1. In terms of processing, polyubiquitinated on Lys-124 by TRAF3IP2; after cell stimulation with IL17A. Polyubiquitinated on Lys-124; after cell stimulation with IL1B or TGFB. This ligand-induced cell stimulation leads to dimerization/oligomerization of TRAF6 molecules, followed by auto-ubiquitination which involves UBE2N and UBE2V1 and leads to TRAF6 activation. This 'Lys-63' site-specific poly-ubiquitination appears to be associated with the activation of signaling molecules. Deubiquitinated by USP10 in a TANK-dependent manner, leading to the negative regulation of NF-kappa-B signaling upon DNA damage. LRRC19 induces 'Lys-63' ubiquitination. Ubiquitinated at Lys-319 by the SCF(FBXL2) complex, leading to its degradation by the proteasome.

Its subcellular location is the cytoplasm. The protein localises to the cell cortex. It is found in the nucleus. The protein resides in the lipid droplet. It carries out the reaction S-ubiquitinyl-[E2 ubiquitin-conjugating enzyme]-L-cysteine + [acceptor protein]-L-lysine = [E2 ubiquitin-conjugating enzyme]-L-cysteine + N(6)-ubiquitinyl-[acceptor protein]-L-lysine.. It participates in protein modification; protein ubiquitination. Functionally, E3 ubiquitin ligase that, together with UBE2N and UBE2V1, mediates the synthesis of 'Lys-63'-linked-polyubiquitin chains conjugated to proteins, such as ECSIT, IKBKG, IRAK1, AKT1 and AKT2. Also mediates ubiquitination of free/unanchored polyubiquitin chain that leads to MAP3K7 activation. Leads to the activation of NF-kappa-B and JUN. Seems to also play a role in dendritic cells (DCs) maturation and/or activation. Represses c-Myb-mediated transactivation, in B-lymphocytes. Adapter protein that seems to play a role in signal transduction initiated via TNF receptor, IL-1 receptor and IL-17 receptor. Regulates osteoclast differentiation by mediating the activation of adapter protein complex 1 (AP-1) and NF-kappa-B, in response to RANK-L stimulation. Together with MAP3K8, mediates CD40 signals that activate ERK in B-cells and macrophages, and thus may play a role in the regulation of immunoglobulin production. Acts as a regulator of the JNK and NF-kappa-B signaling pathways by initiating assembly of heterotypic 'Lys-63'-/'Lys-48'-linked branched ubiquitin chains that are then recognized by TAB2: TRAF6 catalyzes initial 'Lys-63'-linked-polyubiquitin chains that are then branched via 'Lys-48'-linked polyubiquitin by HUWE1. 'Lys-63'-/'Lys-48'-linked branched ubiquitin chains protect 'Lys-63'-linkages from CYLD deubiquitination. Also participates in the TCR signaling by ubiquitinating LAT. The chain is TNF receptor-associated factor 6 (TRAF6) from Cercocebus atys (Sooty mangabey).